The following is a 188-amino-acid chain: Nicotinamide-nucleotide adenylyltransferase (188 aa).

This sequence belongs to the archaeal NMN adenylyltransferase family.

The protein resides in the cytoplasm. The catalysed reaction is beta-nicotinamide D-ribonucleotide + ATP + H(+) = diphosphate + NAD(+). It functions in the pathway cofactor biosynthesis; NAD(+) biosynthesis; NAD(+) from nicotinamide D-ribonucleotide: step 1/1. This is Nicotinamide-nucleotide adenylyltransferase from Thermococcus kodakarensis (strain ATCC BAA-918 / JCM 12380 / KOD1) (Pyrococcus kodakaraensis (strain KOD1)).